The chain runs to 397 residues: Phosphoglycerate kinase (397 aa).

Residues 21-23 (DFN), Arg36, 59-62 (HCGR), Arg118, and Arg151 contribute to the substrate site. Residues Lys201, Glu323, and 353 to 356 (GGDT) contribute to the ATP site.

The protein belongs to the phosphoglycerate kinase family. Monomer.

The protein resides in the cytoplasm. It catalyses the reaction (2R)-3-phosphoglycerate + ATP = (2R)-3-phospho-glyceroyl phosphate + ADP. The protein operates within carbohydrate degradation; glycolysis; pyruvate from D-glyceraldehyde 3-phosphate: step 2/5. In Bartonella henselae (strain ATCC 49882 / DSM 28221 / CCUG 30454 / Houston 1) (Rochalimaea henselae), this protein is Phosphoglycerate kinase.